The following is a 396-amino-acid chain: NADH-quinone oxidoreductase subunit D (396 aa).

The protein belongs to the complex I 49 kDa subunit family. In terms of assembly, NDH-1 is composed of 14 different subunits. Subunits NuoB, C, D, E, F, and G constitute the peripheral sector of the complex.

It is found in the cell inner membrane. It carries out the reaction a quinone + NADH + 5 H(+)(in) = a quinol + NAD(+) + 4 H(+)(out). Its function is as follows. NDH-1 shuttles electrons from NADH, via FMN and iron-sulfur (Fe-S) centers, to quinones in the respiratory chain. The immediate electron acceptor for the enzyme in this species is believed to be ubiquinone. Couples the redox reaction to proton translocation (for every two electrons transferred, four hydrogen ions are translocated across the cytoplasmic membrane), and thus conserves the redox energy in a proton gradient. The chain is NADH-quinone oxidoreductase subunit D from Agrobacterium fabrum (strain C58 / ATCC 33970) (Agrobacterium tumefaciens (strain C58)).